Here is a 249-residue protein sequence, read N- to C-terminus: DNA polymerase sliding clamp (249 aa).

This sequence belongs to the PCNA family. In terms of assembly, homotrimer. The subunits circularize to form a toroid; DNA passes through its center. Replication factor C (RFC) is required to load the toroid on the DNA.

Functionally, sliding clamp subunit that acts as a moving platform for DNA processing. Responsible for tethering the catalytic subunit of DNA polymerase and other proteins to DNA during high-speed replication. In Methanococcus vannielii (strain ATCC 35089 / DSM 1224 / JCM 13029 / OCM 148 / SB), this protein is DNA polymerase sliding clamp.